A 355-amino-acid chain; its full sequence is Alkanal monooxygenase alpha chain (355 aa).

The protein belongs to the bacterial luciferase oxidoreductase family. As to quaternary structure, heterodimer of an alpha and a beta chain.

The enzyme catalyses a long-chain fatty aldehyde + FMNH2 + O2 = a long-chain fatty acid + hnu + FMN + H2O + 2 H(+). Functionally, light-emitting reaction in luminous bacteria. The polypeptide is Alkanal monooxygenase alpha chain (luxA) (Vibrio harveyi (Beneckea harveyi)).